Reading from the N-terminus, the 275-residue chain is Myoblast determination protein 1 homolog 2 (275 aa).

The region spanning 84–135 (DRRKAATMRERRRLGKVNDAFENLKRCTSNNPNQRLPKVEILRNAISYIESL) is the bHLH domain. A compositionally biased stretch (polar residues) spans 232–265 (SGQEGSEGSPCSPQEGSILSRNGGTVPSPTNCPQ). The disordered stretch occupies residues 232 to 275 (SGQEGSEGSPCSPQEGSILSRNGGTVPSPTNCPQPSHDPIYQVL).

In terms of assembly, efficient DNA binding requires dimerization with another bHLH protein.

The protein resides in the nucleus. Functionally, may act as a transcriptional activator that promotes transcription of muscle-specific target genes and plays a role in muscle differentiation. The sequence is that of Myoblast determination protein 1 homolog 2 (myod2) from Oncorhynchus mykiss (Rainbow trout).